The following is a 638-amino-acid chain: XK-related protein 6 (638 aa).

2 disordered regions span residues 24-43 (VGSG…GGDG) and 82-117 (RSAA…PASP). Gly residues predominate over residues 33 to 43 (PGGGGCGGGDG). 7 helical membrane passes run 127 to 147 (LWIV…LWLA), 158 to 178 (CFGL…SLSF), 315 to 335 (TLPC…LASY), 369 to 389 (VISF…FVVV), 410 to 430 (WEEI…WFNV), 439 to 459 (MFAY…LWYF), and 470 to 490 (AVPA…LMLL).

It belongs to the XK family.

It is found in the cell membrane. The sequence is that of XK-related protein 6 from Mus musculus (Mouse).